Reading from the N-terminus, the 467-residue chain is Translation initiation factor eIF2B subunit delta (467 aa).

The disordered stretch occupies residues methionine 1–aspartate 106. Phosphoserine occurs at positions 16, 19, 21, and 23. Residues serine 16 to serine 37 are compositionally biased toward polar residues. Threonine 27 carries the phosphothreonine modification. Serine 28 and serine 37 each carry phosphoserine. A compositionally biased stretch (basic residues) spans leucine 51–arginine 61. Residues proline 84–serine 102 are compositionally biased toward low complexity.

It belongs to the eIF-2B alpha/beta/delta subunits family. As to quaternary structure, component of the translation initiation factor 2B (eIF2B) complex which is a heterodecamer of two sets of five different subunits: alpha, beta, gamma, delta and epsilon. Subunits alpha, beta and delta comprise a regulatory subcomplex and subunits epsilon and gamma comprise a catalytic subcomplex. Within the complex, the hexameric regulatory complex resides at the center, with the two heterodimeric catalytic subcomplexes bound on opposite sides.

The protein resides in the cytoplasm. It localises to the cytosol. Functionally, acts as a component of the translation initiation factor 2B (eIF2B) complex, which catalyzes the exchange of GDP for GTP on the eukaryotic initiation factor 2 (eIF2) complex gamma subunit. Its guanine nucleotide exchange factor activity is repressed when bound to eIF2 complex phosphorylated on the alpha subunit, thereby limiting the amount of methionyl-initiator methionine tRNA available to the ribosome and consequently global translation is repressed. This is Translation initiation factor eIF2B subunit delta (tif224) from Schizosaccharomyces pombe (strain 972 / ATCC 24843) (Fission yeast).